A 520-amino-acid chain; its full sequence is TnpB-like protein L770 (520 aa).

The disordered stretch occupies residues 23-44 (KTKKKVFVKKKPPDKKPLKKPV). Cys474, Cys477, Cys491, and Cys494 together coordinate Zn(2+).

In the central section; belongs to the transposase 2 family. The protein in the C-terminal section; belongs to the transposase 35 family.

In Acanthamoeba polyphaga mimivirus (APMV), this protein is TnpB-like protein L770.